A 158-amino-acid chain; its full sequence is Ribosome maturation factor RimP (158 aa).

This sequence belongs to the RimP family.

The protein resides in the cytoplasm. Functionally, required for maturation of 30S ribosomal subunits. The polypeptide is Ribosome maturation factor RimP (Lactiplantibacillus plantarum (strain ATCC BAA-793 / NCIMB 8826 / WCFS1) (Lactobacillus plantarum)).